Here is a 691-residue protein sequence, read N- to C-terminus: DNA ligase (691 aa).

NAD(+) contacts are provided by residues 53-57 (DSEYD), 102-103 (SL), and Glu135. The active-site N6-AMP-lysine intermediate is Lys137. Residues Arg158, Glu195, Lys310, and Lys334 each coordinate NAD(+). 4 residues coordinate Zn(2+): Cys428, Cys431, Cys446, and Cys452. In terms of domain architecture, BRCT spans 613–691 (SEGLPLDGQT…EEEFLALVGE (79 aa)).

Belongs to the NAD-dependent DNA ligase family. LigA subfamily. Mg(2+) serves as cofactor. It depends on Mn(2+) as a cofactor.

It catalyses the reaction NAD(+) + (deoxyribonucleotide)n-3'-hydroxyl + 5'-phospho-(deoxyribonucleotide)m = (deoxyribonucleotide)n+m + AMP + beta-nicotinamide D-nucleotide.. Its function is as follows. DNA ligase that catalyzes the formation of phosphodiester linkages between 5'-phosphoryl and 3'-hydroxyl groups in double-stranded DNA using NAD as a coenzyme and as the energy source for the reaction. It is essential for DNA replication and repair of damaged DNA. The sequence is that of DNA ligase from Psychrobacter arcticus (strain DSM 17307 / VKM B-2377 / 273-4).